We begin with the raw amino-acid sequence, 474 residues long: 2-succinylbenzoate--CoA ligase (474 aa).

It belongs to the ATP-dependent AMP-binding enzyme family. MenE subfamily.

The catalysed reaction is 2-succinylbenzoate + ATP + CoA = 2-succinylbenzoyl-CoA + AMP + diphosphate. Its pathway is quinol/quinone metabolism; 1,4-dihydroxy-2-naphthoate biosynthesis; 1,4-dihydroxy-2-naphthoate from chorismate: step 5/7. It participates in quinol/quinone metabolism; menaquinone biosynthesis. Functionally, converts 2-succinylbenzoate (OSB) to 2-succinylbenzoyl-CoA (OSB-CoA). This Staphylococcus epidermidis (strain ATCC 12228 / FDA PCI 1200) protein is 2-succinylbenzoate--CoA ligase.